Here is a 370-residue protein sequence, read N- to C-terminus: GDSL esterase/lipase At1g33811 (370 aa).

The N-terminal stretch at 1–24 is a signal peptide; sequence MGILRFVLLISLNLVLFGFKTTVS. The active-site Nucleophile is the Ser41. N-linked (GlcNAc...) asparagine glycans are attached at residues Asn203, Asn241, and Asn242. Catalysis depends on residues Asp336 and His339.

The protein belongs to the 'GDSL' lipolytic enzyme family.

The protein localises to the secreted. This is GDSL esterase/lipase At1g33811 from Arabidopsis thaliana (Mouse-ear cress).